Reading from the N-terminus, the 155-residue chain is Large-conductance mechanosensitive channel (155 aa).

A run of 2 helical transmembrane segments spans residues Val25–Leu45 and Gly98–Val118.

It belongs to the MscL family. As to quaternary structure, homopentamer.

Its subcellular location is the cell inner membrane. Functionally, channel that opens in response to stretch forces in the membrane lipid bilayer. May participate in the regulation of osmotic pressure changes within the cell. The chain is Large-conductance mechanosensitive channel from Novosphingobium aromaticivorans (strain ATCC 700278 / DSM 12444 / CCUG 56034 / CIP 105152 / NBRC 16084 / F199).